The sequence spans 556 residues: MLSDIAIAQRARLEPITKVAEQIGLGPEDLELYGRYKAKVADHVWPRVRSNPDGKLILVTAISPTPAGEGKTTVTVGLGQAMSRIGKRAIIALREPSLGPAFGVKGGAAGGGYSQVVPMDEINLHFTGDFHAVTAANNLLAAMIDNHLHQGNKLGLDPRQITFKRVLDMNDRALRSVVIGLGGKNGGVPRQEEFMITPASEVMATLCLAEDLADLKRRCGEIIVGYTYDGAPVRARDLKAEGAMATLLKEAIKPNLVQTLENTPAFVHGGPFANIAHGCNTVVATRLALKLADYVITEAGFGADLGAEKFIDIKCRLSGLRPDAVVVVATIRSLKMHGGLKKDDLAREDLEALQRGSANLMRHLRNVTEVFGLPAVVAINRFAADTEAEIALLRALVEEAGATAVVADVHARGGDGGIELAQRVVELVEQPNRFRFAYDDEDSLKTKIEKVATRIYGADGVDFTREASRMLKKLESEGFGRAPVCIAKTQYSFSDDPKKLGAPTGWRLTVREVRPSAGAGFVVALTGEIMTMPGLPPVPAAESIDVSDDGEITGLF.

65-72 (TPAGEGKT) provides a ligand contact to ATP.

The protein belongs to the formate--tetrahydrofolate ligase family.

It catalyses the reaction (6S)-5,6,7,8-tetrahydrofolate + formate + ATP = (6R)-10-formyltetrahydrofolate + ADP + phosphate. Its pathway is one-carbon metabolism; tetrahydrofolate interconversion. The sequence is that of Formate--tetrahydrofolate ligase from Symbiobacterium thermophilum (strain DSM 24528 / JCM 14929 / IAM 14863 / T).